Reading from the N-terminus, the 186-residue chain is Transcription factor FapR (186 aa).

It belongs to the FapR family.

In terms of biological role, transcriptional factor involved in regulation of membrane lipid biosynthesis by repressing genes involved in fatty acid and phospholipid metabolism. In Halalkalibacterium halodurans (strain ATCC BAA-125 / DSM 18197 / FERM 7344 / JCM 9153 / C-125) (Bacillus halodurans), this protein is Transcription factor FapR.